The following is a 485-amino-acid chain: Probable glycine dehydrogenase (decarboxylating) subunit 2 (485 aa).

Lysine 273 carries the post-translational modification N6-(pyridoxal phosphate)lysine.

The protein belongs to the GcvP family. C-terminal subunit subfamily. In terms of assembly, the glycine cleavage system is composed of four proteins: P, T, L and H. In this organism, the P 'protein' is a heterodimer of two subunits. Pyridoxal 5'-phosphate serves as cofactor.

The catalysed reaction is N(6)-[(R)-lipoyl]-L-lysyl-[glycine-cleavage complex H protein] + glycine + H(+) = N(6)-[(R)-S(8)-aminomethyldihydrolipoyl]-L-lysyl-[glycine-cleavage complex H protein] + CO2. Functionally, the glycine cleavage system catalyzes the degradation of glycine. The P protein binds the alpha-amino group of glycine through its pyridoxal phosphate cofactor; CO(2) is released and the remaining methylamine moiety is then transferred to the lipoamide cofactor of the H protein. The chain is Probable glycine dehydrogenase (decarboxylating) subunit 2 from Oceanobacillus iheyensis (strain DSM 14371 / CIP 107618 / JCM 11309 / KCTC 3954 / HTE831).